The primary structure comprises 1792 residues: Protein TIC 214 (1792 aa).

The next 6 helical transmembrane spans lie at 18 to 38 (IINSIVVVGLYYGFLTTFSIG), 64 to 84 (FITGQLIMFISIYYAPLHLAL), 87 to 107 (PHIITVIALPYLLFQFFGNNH), 129 to 149 (IFFHNLIFQLLNPFFLPSSIL), 165 to 185 (IFLISSFIGWIIGHTFFMKWI), and 221 to 241 (IFLVFLFITCLYYLGRVPPPF).

It belongs to the TIC214 family. Part of the Tic complex.

Its subcellular location is the plastid. The protein localises to the chloroplast inner membrane. Involved in protein precursor import into chloroplasts. May be part of an intermediate translocation complex acting as a protein-conducting channel at the inner envelope. This Glycine max (Soybean) protein is Protein TIC 214.